Reading from the N-terminus, the 559-residue chain is Berberine bridge enzyme-like A (559 aa).

Residues 1 to 21 form the signal peptide; it reads MFPLIILISFSLASLSETATG. Asparagine 25 and asparagine 37 each carry an N-linked (GlcNAc...) asparagine glycan. A disulfide bridge links cysteine 29 with cysteine 86. The FAD-binding PCMH-type domain maps to 64–240; it reads FMPKPTFIIL…YAWKIRLLKV (177 aa). Histidine 101 bears the Pros-8alpha-FAD histidine mark. Asparagine 321, asparagine 355, and asparagine 494 each carry an N-linked (GlcNAc...) asparagine glycan.

The protein belongs to the oxygen-dependent FAD-linked oxidoreductase family. It depends on FAD as a cofactor. As to expression, mostly expressed in roots.

The protein resides in the vacuole. It participates in alkaloid biosynthesis; nicotine biosynthesis. Functionally, involved in the biosynthesis of pyridine alkaloid natural products, leading mainly to the production of anabasine, anatabine, nicotine and nornicotine, effective deterrents against herbivores with antiparasitic and pesticide properties (neurotoxins); nornicotine serves as the precursor in the synthesis of the carcinogen compound N'-nitrosonornicotine (NNN). Catalyzes a late oxidation step subsequent to the pyridine ring condensation reaction in the biosynthesis of alkaloids. This chain is Berberine bridge enzyme-like A, found in Nicotiana tabacum (Common tobacco).